We begin with the raw amino-acid sequence, 451 residues long: MRECISIHIGQAGIQVGNACWELYCLEHGIQPDGQMPGDKTVGGGDDAFNTFFSETGAGKHVPRAVFVDLEPTVIDEVRTGDYRQLFHPEQLISGKEDAANNFARGHYTIGKEIVDLCLDRIRKLADNCTGLQGFLVFNAVGGGTGSGLGSLLLERLSVDYGKKSKLGFTVYPSPQVSTSVVEPYNSVLSTHSLLEHTDVAVLLDNEAIYDICRRSLDIERPTYTNLNRLVSQVISSLTASLRFDGALNVDVNEFQTNLVPYPRIHFMLSSYAPVISAEKAYHEQLSVAEITNSAFEPSSMMAKCDPRHGKYMACCLMYRGDVVPKDVNAAVATIKTKRTIQFVDWCPTGFKCGINYQPPSVVPGGDLAKVQRAVCMISNSTSVVEVFSRIDIKFDLMYSKRAFVHWYVGEGMEEGEFSEAREDLAALEKDYEEVGSEFDDGDEGDEGDEY.

Q11 contributes to the GTP binding site. The residue at position 40 (K40) is an N6-acetyllysine. Residues E71, G144, T145, T179, N206, and N228 each contribute to the GTP site. E71 contacts Mg(2+). E254 is an active-site residue.

The protein belongs to the tubulin family. As to quaternary structure, dimer of alpha and beta chains. A typical microtubule is a hollow water-filled tube with an outer diameter of 25 nm and an inner diameter of 15 nM. Alpha-beta heterodimers associate head-to-tail to form protofilaments running lengthwise along the microtubule wall with the beta-tubulin subunit facing the microtubule plus end conferring a structural polarity. Microtubules usually have 13 protofilaments but different protofilament numbers can be found in some organisms and specialized cells. Mg(2+) is required as a cofactor. In terms of processing, undergoes a tyrosination/detyrosination cycle, the cyclic removal and re-addition of a C-terminal tyrosine residue by the enzymes tubulin tyrosine carboxypeptidase (TTCP) and tubulin tyrosine ligase (TTL), respectively. Acetylation of alpha chains at Lys-40 stabilizes microtubules and affects affinity and processivity of microtubule motors. This modification has a role in multiple cellular functions, ranging from cell motility, cell cycle progression or cell differentiation to intracellular trafficking and signaling.

It localises to the cytoplasm. The protein resides in the cytoskeleton. It catalyses the reaction GTP + H2O = GDP + phosphate + H(+). In terms of biological role, tubulin is the major constituent of microtubules, a cylinder consisting of laterally associated linear protofilaments composed of alpha- and beta-tubulin heterodimers. Microtubules grow by the addition of GTP-tubulin dimers to the microtubule end, where a stabilizing cap forms. Below the cap, tubulin dimers are in GDP-bound state, owing to GTPase activity of alpha-tubulin. This chain is Tubulin alpha-2 chain (TUBA), found in Oryza sativa subsp. japonica (Rice).